The chain runs to 307 residues: ATP-dependent (S)-NAD(P)H-hydrate dehydratase (307 aa).

Residues 1-291 (MDHFIKLLPK…DEIPKLVRDV (291 aa)) enclose the YjeF C-terminal domain. (6S)-NADPHX-binding positions include glycine 96 and 150 to 156 (NIVEFSR). Residues 194-198 (KGEVD) and 214-223 (SSLRRCGGQG) each bind ATP. Residue aspartate 224 participates in (6S)-NADPHX binding.

Belongs to the NnrD/CARKD family. Mg(2+) serves as cofactor.

The catalysed reaction is (6S)-NADHX + ATP = ADP + phosphate + NADH + H(+). It carries out the reaction (6S)-NADPHX + ATP = ADP + phosphate + NADPH + H(+). In terms of biological role, catalyzes the dehydration of the S-form of NAD(P)HX at the expense of ATP, which is converted to ADP. Together with NAD(P)HX epimerase, which catalyzes the epimerization of the S- and R-forms, the enzyme allows the repair of both epimers of NAD(P)HX, a damaged form of NAD(P)H that is a result of enzymatic or heat-dependent hydration. This chain is ATP-dependent (S)-NAD(P)H-hydrate dehydratase, found in Caenorhabditis elegans.